The sequence spans 687 residues: Fatty acid oxidation complex subunit alpha (687 aa).

Residues 1–191 (MKNTSAFAWT…KLGVVDASVP (191 aa)) form an enoyl-CoA hydratase region. The interval 307 to 687 (KSIDYVGVLG…ADKYGDRFIE (381 aa)) is 3-hydroxyacyl-CoA dehydrogenase.

This sequence in the N-terminal section; belongs to the enoyl-CoA hydratase/isomerase family. The protein in the central section; belongs to the 3-hydroxyacyl-CoA dehydrogenase family. In terms of assembly, heterotetramer of two alpha chains (FadJ) and two beta chains (FadI).

The protein resides in the cytoplasm. It catalyses the reaction a (3S)-3-hydroxyacyl-CoA = a (2E)-enoyl-CoA + H2O. It carries out the reaction a 4-saturated-(3S)-3-hydroxyacyl-CoA = a (3E)-enoyl-CoA + H2O. The catalysed reaction is a (3S)-3-hydroxyacyl-CoA + NAD(+) = a 3-oxoacyl-CoA + NADH + H(+). The enzyme catalyses (3S)-3-hydroxybutanoyl-CoA = (3R)-3-hydroxybutanoyl-CoA. The protein operates within lipid metabolism; fatty acid beta-oxidation. Functionally, catalyzes the formation of a hydroxyacyl-CoA by addition of water on enoyl-CoA. Also exhibits 3-hydroxyacyl-CoA epimerase and 3-hydroxyacyl-CoA dehydrogenase activities. In Aliivibrio fischeri (strain ATCC 700601 / ES114) (Vibrio fischeri), this protein is Fatty acid oxidation complex subunit alpha.